The primary structure comprises 318 residues: Dehydration-responsive element-binding protein 2E (318 aa).

Residues 1–15 (MESYGRKRAWKKGPT) show a composition bias toward basic residues. The segment at 1-24 (MESYGRKRAWKKGPTRGKGGPQNA) is disordered. The AP2/ERF DNA-binding region spans 27–84 (EYRGVRQRTWGKWVAEIREPNKRTRLWLGSFATAEEAALAYDEAARRLYGPDAFLNLP). Residues 140 to 178 (ELKNSSSSPTKPPPRTPTRANPPPPPLPTSSPCSTVTNS) are disordered. Over residues 149–168 (TKPPPRTPTRANPPPPPLPT) the composition is skewed to pro residues.

It belongs to the AP2/ERF transcription factor family. ERF subfamily.

Its subcellular location is the nucleus. In terms of biological role, probable transcriptional activator that binds to the DNA sequence 5'-[AG]CCGAC-3' of the cis-acting dehydration-responsive element (DRE). The protein is Dehydration-responsive element-binding protein 2E (DREB2E) of Oryza sativa subsp. japonica (Rice).